A 61-amino-acid chain; its full sequence is Short neurotoxin 1 (61 aa).

4 disulfide bridges follow: Cys-3-Cys-23, Cys-17-Cys-40, Cys-42-Cys-53, and Cys-54-Cys-59.

The protein belongs to the three-finger toxin family. Short-chain subfamily. Type I alpha-neurotoxin sub-subfamily. In terms of tissue distribution, expressed by the venom gland.

The protein localises to the secreted. Functionally, binds to muscle nicotinic acetylcholine receptor (nAChR) and inhibit acetylcholine from binding to the receptor, thereby impairing neuromuscular transmission. This Naja annulata annulata (Banded water cobra) protein is Short neurotoxin 1.